Reading from the N-terminus, the 261-residue chain is Small ribosomal subunit protein mS23 (261 aa).

The segment at 234–261 is disordered; that stretch reads NPSESWATDEKDPKKNDDIEEDVEEIKL. The span at 241 to 250 shows a compositional bias: basic and acidic residues; sequence TDEKDPKKND. Acidic residues predominate over residues 251–261; that stretch reads DIEEDVEEIKL.

This sequence belongs to the mitochondrion-specific ribosomal protein mS23 family. As to quaternary structure, component of the mitochondrial small ribosomal subunit.

The protein resides in the mitochondrion. This chain is Small ribosomal subunit protein mS23 (RSM25), found in Vanderwaltozyma polyspora (strain ATCC 22028 / DSM 70294 / BCRC 21397 / CBS 2163 / NBRC 10782 / NRRL Y-8283 / UCD 57-17) (Kluyveromyces polysporus).